The sequence spans 426 residues: Phosphoribosylamine--glycine ligase (426 aa).

Residues 113-320 (KSLMTEAKIP…LLELLYRAST (208 aa)) enclose the ATP-grasp domain. 139 to 200 (LESKSIPIVI…EEFMEGQEAS (62 aa)) contributes to the ATP binding site. Residues Glu290 and Asn292 each contribute to the Mg(2+) site.

It belongs to the GARS family. The cofactor is Mg(2+). Mn(2+) is required as a cofactor.

The catalysed reaction is 5-phospho-beta-D-ribosylamine + glycine + ATP = N(1)-(5-phospho-beta-D-ribosyl)glycinamide + ADP + phosphate + H(+). It functions in the pathway purine metabolism; IMP biosynthesis via de novo pathway; N(1)-(5-phospho-D-ribosyl)glycinamide from 5-phospho-alpha-D-ribose 1-diphosphate: step 2/2. This Leptospira interrogans serogroup Icterohaemorrhagiae serovar Lai (strain 56601) protein is Phosphoribosylamine--glycine ligase.